The primary structure comprises 291 residues: MACLSRIFLILMITMSSSSPPFCSGGSRKELRDKEITSKSDDTQASYVLGSKFVDPTRVLQLSWLPRVFLYRGFLSEEECDHLISLRKETTEVYSVDADGKTQLDPVVAGIEEKVSAWTFLPGENGGSIKVRSYTSEKSGKKLDYFGEEPSSVLHESLLATVVLYLSNTTQGGELLFPNSEMKPKNSCLEGGNILRPVKGNAILFFTRLLNASLDGKSTHLRCPVVKGELLVATKLIYAKKQARIEESGECSDEDENCGRWAKLGECKKNPVYMIGSPDYYGTCRKSCNAC.

At 1–156 (MACLSRIFLI…GEEPSSVLHE (156 aa)) the chain is on the cytoplasmic side. One can recognise a Fe2OG dioxygenase domain in the interval 125 to 239 (NGGSIKVRSY…LLVATKLIYA (115 aa)). Fe cation is bound by residues lysine 142 and aspartate 144. The helical; Signal-anchor for type II membrane protein transmembrane segment at 157-173 (SLLATVVLYLSNTTQGG) threads the bilayer. Over 174-291 (ELLFPNSEMK…GTCRKSCNAC (118 aa)) the chain is Lumenal. A glycan (N-linked (GlcNAc...) asparagine) is linked at asparagine 211. Histidine 220 is a binding site for Fe cation. In terms of domain architecture, ShKT spans 251–291 (CSDEDENCGRWAKLGECKKNPVYMIGSPDYYGTCRKSCNAC). Intrachain disulfides connect cysteine 251-cysteine 291, cysteine 258-cysteine 284, and cysteine 267-cysteine 288.

The protein belongs to the P4HA family. It depends on Fe(2+) as a cofactor. L-ascorbate is required as a cofactor.

Its subcellular location is the endoplasmic reticulum membrane. The enzyme catalyses L-prolyl-[collagen] + 2-oxoglutarate + O2 = trans-4-hydroxy-L-prolyl-[collagen] + succinate + CO2. Catalyzes the post-translational formation of 4-hydroxyproline in -Xaa-Pro-Gly- sequences in proline-rich peptide sequences of plant glycoproteins and other proteins. Hydroxyprolines are important constituent of many plant cell wall glycoproteins such as extensins, hydroxyproline-rich glycoproteins, lectins and arabinogalactan proteins. This Arabidopsis thaliana (Mouse-ear cress) protein is Probable prolyl 4-hydroxylase 12.